Reading from the N-terminus, the 325-residue chain is Lipoyl synthase (325 aa).

The tract at residues 1 to 31 is disordered; sequence MANLIDNTARSAASDARAARHPEKQKRADTP. Residues 17-31 show a composition bias toward basic and acidic residues; sequence RAARHPEKQKRADTP. Residues C65, C70, C76, C91, C95, C98, and S304 each coordinate [4Fe-4S] cluster. A Radical SAM core domain is found at 77–293; the sequence is WEQKHATFMI…ETIARAKGFL (217 aa).

The protein belongs to the radical SAM superfamily. Lipoyl synthase family. Requires [4Fe-4S] cluster as cofactor.

It is found in the cytoplasm. The catalysed reaction is [[Fe-S] cluster scaffold protein carrying a second [4Fe-4S](2+) cluster] + N(6)-octanoyl-L-lysyl-[protein] + 2 oxidized [2Fe-2S]-[ferredoxin] + 2 S-adenosyl-L-methionine + 4 H(+) = [[Fe-S] cluster scaffold protein] + N(6)-[(R)-dihydrolipoyl]-L-lysyl-[protein] + 4 Fe(3+) + 2 hydrogen sulfide + 2 5'-deoxyadenosine + 2 L-methionine + 2 reduced [2Fe-2S]-[ferredoxin]. The protein operates within protein modification; protein lipoylation via endogenous pathway; protein N(6)-(lipoyl)lysine from octanoyl-[acyl-carrier-protein]: step 2/2. Functionally, catalyzes the radical-mediated insertion of two sulfur atoms into the C-6 and C-8 positions of the octanoyl moiety bound to the lipoyl domains of lipoate-dependent enzymes, thereby converting the octanoylated domains into lipoylated derivatives. The chain is Lipoyl synthase from Maricaulis maris (strain MCS10) (Caulobacter maris).